A 369-amino-acid polypeptide reads, in one-letter code: 1-aminocyclopropane-1-carboxylate oxidase homolog 3 (369 aa).

The region spanning 217-318 is the Fe2OG dioxygenase domain; that stretch reads KGLLMLSHYY…VSVACFFTTG (102 aa). Positions 241, 243, and 297 each coordinate Fe cation.

This sequence belongs to the iron/ascorbate-dependent oxidoreductase family. Requires Fe cation as cofactor.

This Arabidopsis thaliana (Mouse-ear cress) protein is 1-aminocyclopropane-1-carboxylate oxidase homolog 3.